Consider the following 226-residue polypeptide: uncharacterized protein (226 aa).

In terms of domain architecture, RNase H type-1 spans 71–207 (EPDDITVYFD…ADGLAKKILS (137 aa)).

This is an uncharacterized protein from Bacillus subtilis (strain 168).